A 587-amino-acid polypeptide reads, in one-letter code: DNA ligase (587 aa).

Residues Asp32–Asp36, Ser84–Leu85, and Asp116 contribute to the NAD(+) site. The N6-AMP-lysine intermediate role is filled by Lys118. NAD(+)-binding residues include Arg139, Glu176, Lys293, and Lys317. Residues Cys411, Cys414, Cys429, and Cys435 each coordinate Zn(2+).

This sequence belongs to the NAD-dependent DNA ligase family. LigA subfamily. The cofactor is Mg(2+). Mn(2+) serves as cofactor.

The catalysed reaction is NAD(+) + (deoxyribonucleotide)n-3'-hydroxyl + 5'-phospho-(deoxyribonucleotide)m = (deoxyribonucleotide)n+m + AMP + beta-nicotinamide D-nucleotide.. In terms of biological role, DNA ligase that catalyzes the formation of phosphodiester linkages between 5'-phosphoryl and 3'-hydroxyl groups in double-stranded DNA using NAD as a coenzyme and as the energy source for the reaction. It is essential for DNA replication and repair of damaged DNA. The chain is DNA ligase from Buchnera aphidicola subsp. Cinara cedri (strain Cc).